A 151-amino-acid chain; its full sequence is Transcriptional regulator MraZ (151 aa).

2 consecutive SpoVT-AbrB domains span residues 5–52 (ATAV…PLDE) and 81–124 (ATEC…SDVE).

This sequence belongs to the MraZ family. As to quaternary structure, forms oligomers.

Its subcellular location is the cytoplasm. It is found in the nucleoid. This Haemophilus influenzae (strain 86-028NP) protein is Transcriptional regulator MraZ.